The sequence spans 119 residues: Large ribosomal subunit protein bL20 (119 aa).

It belongs to the bacterial ribosomal protein bL20 family.

In terms of biological role, binds directly to 23S ribosomal RNA and is necessary for the in vitro assembly process of the 50S ribosomal subunit. It is not involved in the protein synthesizing functions of that subunit. This Clostridium botulinum (strain ATCC 19397 / Type A) protein is Large ribosomal subunit protein bL20.